We begin with the raw amino-acid sequence, 190 residues long: Segregation and condensation protein B (190 aa).

It belongs to the ScpB family. Homodimer. Homodimerization may be required to stabilize the binding of ScpA to the Smc head domains. Component of a cohesin-like complex composed of ScpA, ScpB and the Smc homodimer, in which ScpA and ScpB bind to the head domain of Smc. The presence of the three proteins is required for the association of the complex with DNA.

The protein resides in the cytoplasm. Its function is as follows. Participates in chromosomal partition during cell division. May act via the formation of a condensin-like complex containing Smc and ScpA that pull DNA away from mid-cell into both cell halves. In Bacillus cereus (strain B4264), this protein is Segregation and condensation protein B.